We begin with the raw amino-acid sequence, 568 residues long: 2-succinyl-5-enolpyruvyl-6-hydroxy-3-cyclohexene-1-carboxylate synthase (568 aa).

The protein belongs to the TPP enzyme family. MenD subfamily. As to quaternary structure, homodimer. It depends on Mg(2+) as a cofactor. Mn(2+) is required as a cofactor. Thiamine diphosphate serves as cofactor.

The catalysed reaction is isochorismate + 2-oxoglutarate + H(+) = 5-enolpyruvoyl-6-hydroxy-2-succinyl-cyclohex-3-ene-1-carboxylate + CO2. It participates in quinol/quinone metabolism; 1,4-dihydroxy-2-naphthoate biosynthesis; 1,4-dihydroxy-2-naphthoate from chorismate: step 2/7. It functions in the pathway quinol/quinone metabolism; menaquinone biosynthesis. In terms of biological role, catalyzes the thiamine diphosphate-dependent decarboxylation of 2-oxoglutarate and the subsequent addition of the resulting succinic semialdehyde-thiamine pyrophosphate anion to isochorismate to yield 2-succinyl-5-enolpyruvyl-6-hydroxy-3-cyclohexene-1-carboxylate (SEPHCHC). The polypeptide is 2-succinyl-5-enolpyruvyl-6-hydroxy-3-cyclohexene-1-carboxylate synthase (Haemophilus influenzae (strain 86-028NP)).